The sequence spans 87 residues: MKENTHPNYREVVFQDMSSDFSFVTRSTIQTKESIVWKDGKEYPLAKIEVSSESHPFYTGTQKIMDTAGRVEKFRQKFGSKAGKAAK.

The protein belongs to the bacterial ribosomal protein bL31 family. Type B subfamily. As to quaternary structure, part of the 50S ribosomal subunit.

The sequence is that of Large ribosomal subunit protein bL31B from Ralstonia nicotianae (strain ATCC BAA-1114 / GMI1000) (Ralstonia solanacearum).